The chain runs to 594 residues: Dual specificity protein phosphatase CDC14A (594 aa).

Positions 7-162 (ELIGACEFMK…GLQHGFFDFE (156 aa)) are a. Residues 163–176 (TFDVDEYEHYERVE) form a linker region. The interval 177–343 (NGDFNWIVPG…QGDIFRSKLK (167 aa)) is b. Residues 179–336 (DFNWIVPGKF…KQASLWVQGD (158 aa)) enclose the Tyrosine-protein phosphatase domain. Residue C278 is the Phosphocysteine intermediate of the active site. Residues 396–435 (GDKLRALKSQRQPRTSPSCAFRSDDTKGHPRAVSQPFRLS) are disordered. Residues 404 to 413 (SQRQPRTSPS) are compositionally biased toward polar residues. At S484 the chain carries Phosphoserine. The segment at 487 to 560 (NLNAATDDPE…PGPHSAKTEE (74 aa)) is disordered. Residues 500 to 531 (TSSSSKAGFTASPFTNLLNGSSQPTTRNYPEL) show a composition bias toward polar residues. A compositionally biased stretch (low complexity) spans 532 to 549 (NNNQYNRSSNSNGGNLNS). The residue at position 583 (S583) is a Phosphoserine.

This sequence belongs to the protein-tyrosine phosphatase family. Non-receptor class CDC14 subfamily. In terms of assembly, interacts with KIF20A, which is required to localize CDC14 to the midzone of the mitotic spindle.

Its subcellular location is the nucleus. It is found in the cytoplasm. It localises to the cytoskeleton. The protein localises to the microtubule organizing center. The protein resides in the centrosome. Its subcellular location is the spindle pole. It is found in the spindle. It localises to the cell projection. The protein localises to the kinocilium. The protein resides in the stereocilium. It catalyses the reaction O-phospho-L-tyrosyl-[protein] + H2O = L-tyrosyl-[protein] + phosphate. The enzyme catalyses O-phospho-L-seryl-[protein] + H2O = L-seryl-[protein] + phosphate. The catalysed reaction is O-phospho-L-threonyl-[protein] + H2O = L-threonyl-[protein] + phosphate. Functionally, dual-specificity phosphatase. Required for centrosome separation and productive cytokinesis during cell division. Dephosphorylates SIRT2 around early anaphase. May dephosphorylate the APC subunit FZR1/CDH1, thereby promoting APC-FZR1 dependent degradation of mitotic cyclins and subsequent exit from mitosis. Required for normal hearing. The chain is Dual specificity protein phosphatase CDC14A (CDC14A) from Homo sapiens (Human).